A 213-amino-acid chain; its full sequence is Adenylate kinase (213 aa).

14–19 lines the ATP pocket; that stretch reads GSGKGT. An NMP region spans residues 34 to 63; that stretch reads SSGNLLRSAIKASTPLGIKASEYIDEGQLV. AMP-binding positions include Ser-35, Arg-40, 61–63, 89–92, and Gln-96; these read QLV and GFPR. The LID stretch occupies residues 129–162; the sequence is SRFICPSCNFVYNQSQGFRECPTCHSELVRRSDD. An ATP-binding site is contributed by Arg-130. The Zn(2+) site is built by Cys-133 and Cys-136. Position 139–140 (139–140) interacts with ATP; sequence VY. The Zn(2+) site is built by Cys-149 and Cys-152. The AMP site is built by Arg-159 and Arg-170. Position 198 (Lys-198) interacts with ATP.

The protein belongs to the adenylate kinase family. In terms of assembly, monomer.

Its subcellular location is the cytoplasm. The enzyme catalyses AMP + ATP = 2 ADP. The protein operates within purine metabolism; AMP biosynthesis via salvage pathway; AMP from ADP: step 1/1. Its function is as follows. Catalyzes the reversible transfer of the terminal phosphate group between ATP and AMP. Plays an important role in cellular energy homeostasis and in adenine nucleotide metabolism. This is Adenylate kinase from Chlamydia felis (strain Fe/C-56) (Chlamydophila felis).